The following is a 342-amino-acid chain: Methionyl-tRNA formyltransferase (342 aa).

S110 to P113 provides a ligand contact to (6S)-5,6,7,8-tetrahydrofolate.

This sequence belongs to the Fmt family.

The catalysed reaction is L-methionyl-tRNA(fMet) + (6R)-10-formyltetrahydrofolate = N-formyl-L-methionyl-tRNA(fMet) + (6S)-5,6,7,8-tetrahydrofolate + H(+). Attaches a formyl group to the free amino group of methionyl-tRNA(fMet). The formyl group appears to play a dual role in the initiator identity of N-formylmethionyl-tRNA by promoting its recognition by IF2 and preventing the misappropriation of this tRNA by the elongation apparatus. In Synechococcus sp. (strain CC9311), this protein is Methionyl-tRNA formyltransferase.